Consider the following 160-residue polypeptide: Small RNA binding protein 1 (160 aa).

The RRM domain maps to 8-86 (FRCFVGGLAW…RNITVNEAQQ (79 aa)). Positions 82 to 160 (NEAQQRGGGG…GGGSEGGWRN (79 aa)) are disordered. Gly residues predominate over residues 87-160 (RGGGGGGGYN…GGGSEGGWRN (74 aa)). Positions 88–157 (GGGGGGGYNR…GSGGGGSEGG (70 aa)) are glycine-rich (GR) required for cell-to-cell movement.

This sequence belongs to the GR-RBP family. As to quaternary structure, binds to small phloem-mobile single-stranded RNAs (ss-sRNA, e.g. small interfering RNA (siRNA) and microRNA (miRNA)) in the phloeme exudate, including viral-derived sRNA (vsiRNA). Accumulates in phloem exudates.

The protein resides in the secreted. In terms of biological role, possibly has a role in RNA transcription or processing during stress. Binds sequence non-specifically to RNAs and DNAs. Mediates cell-to-cell trafficking of RNA interference (RNAi) signals (small RNAs (sRNA), e.g. small interfering RNA (siRNA) and microRNA (miRNA)) which regulate growth and development, as well as responses to environmental inputs, including pathogen attack; can compromise zucchini yellow mosaic virus (ZYMV) and tobacco rattle virus (TRV) infections at the early stage. The protein is Small RNA binding protein 1 of Cucumis sativus (Cucumber).